The chain runs to 1311 residues: Mitogen-activated protein kinase kinase kinase 19 (1311 aa).

Disordered stretches follow at residues 85–119 (PDPL…SPPD), 250–274 (PLSQ…PVEH), 330–363 (SVKE…YLSS), 396–472 (MTPA…NPEM), 486–508 (EGTS…PAQN), 576–607 (HRPH…KQAF), and 734–767 (SKDK…FLSS). The segment covering 250-261 (PLSQSAEFSSSK) has biased composition (polar residues). Composition is skewed to basic and acidic residues over residues 262-274 (NHQE…PVEH), 330-345 (SVKE…RDSG), and 450-464 (LEGH…KIPM). Basic and acidic residues predominate over residues 734–748 (SKDKGCKDMGGHTED). The 264-residue stretch at 1044–1307 (WTKGEILGRG…ALQLLKHSFL (264 aa)) folds into the Protein kinase domain. ATP-binding positions include 1050–1058 (LGRGAYGTV) and Lys1072. Catalysis depends on Asp1169, which acts as the Proton acceptor.

This sequence belongs to the protein kinase superfamily. STE Ser/Thr protein kinase family. STE20 subfamily.

It catalyses the reaction L-seryl-[protein] + ATP = O-phospho-L-seryl-[protein] + ADP + H(+). It carries out the reaction L-threonyl-[protein] + ATP = O-phospho-L-threonyl-[protein] + ADP + H(+). This Mus musculus (Mouse) protein is Mitogen-activated protein kinase kinase kinase 19 (Map3k19).